The primary structure comprises 265 residues: MALVSINQLPENILLEVFMHVPARQLLRNCRPVCCLWRDLIDLVSLWKRKCLREGYVTEDWDQPVSDWKVFYFLCSLRRNLLRNPCAEEDMKSWKIDSNGGDQWKVESLPGAHGTGFPDSKVKKYFVTSYDMCLKSQIIDLKAEGYWEELLDKFRPDIVVKDWFAPRADCGCTYQIRVQLASADYLVLASFEPPPVTIHQWNDAKWTEVSHTFSDYPPGVRHIFFQHGGKDTQFWAGWYGPRVTNSSVVISHRVTRNPPHAMAQP.

The 48-residue stretch at 3-50 (LVSINQLPENILLEVFMHVPARQLLRNCRPVCCLWRDLIDLVSLWKRK) folds into the F-box domain. The FBA domain occupies 71–252 (FYFLCSLRRN…VTNSSVVISH (182 aa)). S251 bears the Phosphoserine mark.

Part of a SCF (SKP1-cullin-F-box) protein ligase complex. Interacts with VCP, CHEK1 and CUL1.

The protein localises to the cytoplasm. It functions in the pathway protein modification; protein ubiquitination. Its function is as follows. Substrate-recognition component of some SCF (SKP1-CUL1-F-box protein)-type E3 ubiquitin ligase complexes. Involved in endoplasmic reticulum-associated degradation pathway (ERAD) for misfolded lumenal proteins by recognizing and binding sugar chains on unfolded glycoproteins that are retrotranslocated into the cytosol and promoting their ubiquitination and subsequent degradation. Able to recognize and bind denatured glycoproteins, which are modified with not only high-mannose but also complex-type oligosaccharides. Also recognizes sulfated glycans. Also involved in DNA damage response by specifically recognizing activated CHEK1 (phosphorylated on 'Ser-345'), promoting its ubiquitination and degradation. Ubiquitination of CHEK1 is required to ensure that activated CHEK1 does not accumulate as cells progress through S phase, or when replication forks encounter transient impediments during normal DNA replication. The polypeptide is F-box only protein 6 (FBXO6) (Bos taurus (Bovine)).